The sequence spans 336 residues: GTPase Obg (336 aa).

The region spanning 1–159 (MKFIDEATII…RRLQLELILL (159 aa)) is the Obg domain. Residues 160 to 333 (ADVGLLGLPN…LCRDIMLFIN (174 aa)) form the OBG-type G domain. Residues 166-173 (GLPNVGKS), 191-195 (FTTLV), 213-216 (DIPG), 283-286 (NKLD), and 314-316 (SAM) each bind GTP. Mg(2+) contacts are provided by serine 173 and threonine 193.

This sequence belongs to the TRAFAC class OBG-HflX-like GTPase superfamily. OBG GTPase family. As to quaternary structure, monomer. Mg(2+) serves as cofactor.

It is found in the cytoplasm. In terms of biological role, an essential GTPase which binds GTP, GDP and possibly (p)ppGpp with moderate affinity, with high nucleotide exchange rates and a fairly low GTP hydrolysis rate. Plays a role in control of the cell cycle, stress response, ribosome biogenesis and in those bacteria that undergo differentiation, in morphogenesis control. The chain is GTPase Obg from Baumannia cicadellinicola subsp. Homalodisca coagulata.